Consider the following 799-residue polypeptide: MEERGPDIEKYGSQPCTPLSFDPMLPSTSRVATPVRPSSTLSARQAPASPFRAQPQNMEPSISRVHELREGAAVKRSYTNDWMQGNYIPPNPQQQQYQRPPSMIGSTISNMSNLSHMTKFSALSVNTQCGQFDNWIYQSQPALSKVSHSSVENQDPMKRRERMSIPEIVQSLASYEMSDQVAAIRELEPLAKAEALESTYCQADLGKIINALFEVLVPRPQENENVIRKVFEILHRAAVPKHVRMTEKIFHSLNLELMNTNSSKHSFQVPRPYSIYELVIERASRLDTAYDQAAMLLLAQICCKPFFMKYVFSEKEQSAGHRRLHEVVMQFAIKNLQQQETKRKSKGFCVSIIKNLSRRNRSIWSIVYELHVIPIFHDIIKDEYSDEDLLWPTMQALTTFCSIERVGEDFVKLGGAQDLCNLLYHGSTRLLHELLACMQRLSLLQEIGNQDMEESIRRVIQVVGSDDATIAERATGVLRNIGQPNKQNKVIMVRNGVTAHAIAVLRTSMRFQSQLREQQNARTPKNQIDAAKNQILSIYENCLSILNNVTKMGKDDILDSAIQACRMISANPDAAIVLLHFLNAGAPKCRKLAVNVMKRVIENVPAFAEPFVDLPGTTQETLPILLLKRAYESLDEWKKAVVEVMRSEPNTQQFRDAIEKRQDHEDIVWKSVSLLSNLCRNGNPRFFERVKVEMLYTRPTNPFTSLFPEMSDVILYEWLDFILAICGTEWSLQNCLMYHFLKQANITHEYLLHYRRPNPQICDKIKNIIDTGMRQQQQHNQLEQMAMMHAQQQHQQLPM.

The segment covering 1–10 (MEERGPDIEK) has biased composition (basic and acidic residues). The interval 1–60 (MEERGPDIEKYGSQPCTPLSFDPMLPSTSRVATPVRPSSTLSARQAPASPFRAQPQNMEP) is disordered. Residues 26-43 (PSTSRVATPVRPSSTLSA) are compositionally biased toward polar residues. The stretch at 454-496 (ESIRRVIQVVGSDDATIAERATGVLRNIGQPNKQNKVIMVRNG) is one ARM repeat.

Interacts (independently of ARM repeat) with nhr-25. Component of the beta-catenin-lit-1 complex (also called the lit-1/wrm-1 complex or the wrm-1/lit-1 kinase complex) at least composed of lit-1 and wrm-1. Interacts (via N-terminus) with lit-1; the interaction is direct and activates lit-1 kinase activity which leads to the phosphorylation of pop-1. This promotes pop-1 interaction with par-5 and translocation of pop-1 from the nucleus to the cytoplasm.

The protein localises to the cytoplasm. The protein resides in the cell cortex. Its subcellular location is the nucleus. Its function is as follows. Antagonistic role in the Wnt signaling pathway that operates in embryogenesis. When located at the cortex it has been shown to inhibit Wnt signaling during asymmetric cell division but when relocated to the nucleus it shows positive regulation. Has a role in blastomere signaling during endoderm specification. Component of the beta-catenin-lit-1 complex which promotes phosphorylation, down-regulation and subcellular relocation of pop-1. Within the complex, activates lit-1-dependent kinase activity. Can substitute for bar-1 indicating functional redundancy. Appears to have a role in centrosome positioning. Involved in the development of distal tip cells (DTC) by regulating the asymmetric distribution of cye-1 and cki-1 between the daughters of Z1.a and Z4.p cells. This chain is Armadillo repeat-containing protein wrm-1, found in Caenorhabditis briggsae.